The chain runs to 506 residues: GTPase Der (506 aa).

EngA-type G domains lie at 3 to 166 (PVVA…GEQL) and 218 to 391 (IKIA…ACAT). GTP is bound by residues 9–16 (GRPNVGKS), 56–60 (DTGGI), 118–121 (NKTD), 224–231 (GRPNVGKS), 271–275 (DTAGV), and 336–339 (NKWD). The 85-residue stretch at 392–476 (QKTSTSMLTR…PIRIQFQEGN (85 aa)) folds into the KH-like domain.

It belongs to the TRAFAC class TrmE-Era-EngA-EngB-Septin-like GTPase superfamily. EngA (Der) GTPase family. In terms of assembly, associates with the 50S ribosomal subunit.

GTPase that plays an essential role in the late steps of ribosome biogenesis. In Actinobacillus pleuropneumoniae serotype 5b (strain L20), this protein is GTPase Der.